The sequence spans 382 residues: MGMLKIGKNCSVCKEWQEHCYWSHMADDCKHFLTYMVGDFTESMIVPSRFANNFNGHISEVVNLKSPSGKTWSIGVAYSDTGELVLRSGWKEFVDANGVQENDCLLFRYSGVSSFDVLIFDPSGCEKASPHFVENRGFGREEKSAGAEGGGRDGDKNGHHQHQLEMTPHKNSSRCRSIPSACKRGLFSDEIEQDHREEKKEGDDEDEDEDEDEDVDKDGEDRYYFCRHGGRVTEYNLSKGDKEEISRVPVPVEPGNPVLVKVIHASHLLSSRYSTVGVSPEFAGRYLGPAMAREVVMERGGGGGGGDQWHVRFVRRESSRGFHGTGWRRFARDNGLLAHDVCLFELRLVDGAGAGDRLRRRPRPTMAVHVLRRVRGRFVLIR.

Positions 29 to 123 form a DNA-binding region, TF-B3 1; the sequence is CKHFLTYMVG…SFDVLIFDPS (95 aa). Composition is skewed to basic and acidic residues over residues 136 to 158 and 193 to 202; these read RGFG…DKNG and QDHREEKKEG. The tract at residues 136–222 is disordered; sequence RGFGREEKSA…EDVDKDGEDR (87 aa). The segment covering 203-218 has biased composition (acidic residues); it reads DDEDEDEDEDEDVDKD. The segment at residues 261–363 is a DNA-binding region (TF-B3 2); sequence KVIHASHLLS…AGDRLRRRPR (103 aa).

The protein localises to the nucleus. This Oryza sativa subsp. japonica (Rice) protein is B3 domain-containing protein Os03g0622100.